Here is a 268-residue protein sequence, read N- to C-terminus: Tryptophan synthase alpha chain (268 aa).

Active-site proton acceptor residues include E49 and D60.

It belongs to the TrpA family. Tetramer of two alpha and two beta chains.

It catalyses the reaction (1S,2R)-1-C-(indol-3-yl)glycerol 3-phosphate + L-serine = D-glyceraldehyde 3-phosphate + L-tryptophan + H2O. It participates in amino-acid biosynthesis; L-tryptophan biosynthesis; L-tryptophan from chorismate: step 5/5. Its function is as follows. The alpha subunit is responsible for the aldol cleavage of indoleglycerol phosphate to indole and glyceraldehyde 3-phosphate. The sequence is that of Tryptophan synthase alpha chain from Escherichia coli O139:H28 (strain E24377A / ETEC).